The primary structure comprises 199 residues: ATP-dependent Clp protease proteolytic subunit (199 aa).

Catalysis depends on Ser98, which acts as the Nucleophile. The active site involves His123.

It belongs to the peptidase S14 family. Fourteen ClpP subunits assemble into 2 heptameric rings which stack back to back to give a disk-like structure with a central cavity, resembling the structure of eukaryotic proteasomes.

It localises to the cytoplasm. The enzyme catalyses Hydrolysis of proteins to small peptides in the presence of ATP and magnesium. alpha-casein is the usual test substrate. In the absence of ATP, only oligopeptides shorter than five residues are hydrolyzed (such as succinyl-Leu-Tyr-|-NHMec, and Leu-Tyr-Leu-|-Tyr-Trp, in which cleavage of the -Tyr-|-Leu- and -Tyr-|-Trp bonds also occurs).. In terms of biological role, cleaves peptides in various proteins in a process that requires ATP hydrolysis. Has a chymotrypsin-like activity. Plays a major role in the degradation of misfolded proteins. The polypeptide is ATP-dependent Clp protease proteolytic subunit (Clostridium botulinum (strain Alaska E43 / Type E3)).